Here is a 1131-residue protein sequence, read N- to C-terminus: Major DNA-binding protein (1131 aa).

The Required for filament formation motif lies at 790–791; that stretch reads FW. Residues 1112 to 1131 form a required for nuclear localization region; sequence LKCEETEHENEEPSLKKARL.

The protein belongs to the herpesviridae major DNA-binding protein family. As to quaternary structure, homooligomers. Forms double-helical filaments necessary for the formation of replication compartments within the host nucleus. Interacts with the origin-binding protein. Interacts with the helicase primase complex; this interaction stimulates primer synthesis activity of the helicase-primase complex. Interacts with the DNA polymerase. Interacts with the alkaline exonuclease; this interaction increases its nuclease processivity.

It is found in the host nucleus. In terms of biological role, single-stranded DNA-binding protein required for DNA replication. Functionally, plays several crucial roles in viral infection. Participates in the opening of the viral DNA origin to initiate replication by interacting with the origin-binding protein. May disrupt loops, hairpins and other secondary structures present on ssDNA to reduce and eliminate pausing of viral DNA polymerase at specific sites during elongation. Promotes viral DNA recombination by performing strand-transfer, characterized by the ability to transfer a DNA strand from a linear duplex to a complementary single-stranded DNA circle. Can also catalyze the renaturation of complementary single strands. Additionally, reorganizes the host cell nucleus, leading to the formation of prereplicative sites and replication compartments. This process is driven by the protein which can form double-helical filaments in the absence of DNA. This Human herpesvirus 7 (strain JI) (HHV-7) protein is Major DNA-binding protein.